The chain runs to 96 residues: ATP synthase subunit c (96 aa).

Transmembrane regions (helical) follow at residues 24–44 and 75–95; these read HVGAYIGAGMAMTAAAGVGVG and AIAESSAIYGLIIAFILIFVA.

Belongs to the ATPase C chain family. F-type ATPases have 2 components, F(1) - the catalytic core - and F(0) - the membrane proton channel. F(1) has five subunits: alpha(3), beta(3), gamma(1), delta(1), epsilon(1). F(0) has three main subunits: a(1), b(2) and c(10-14). The alpha and beta chains form an alternating ring which encloses part of the gamma chain. F(1) is attached to F(0) by a central stalk formed by the gamma and epsilon chains, while a peripheral stalk is formed by the delta and b chains.

Its subcellular location is the cell membrane. Its function is as follows. F(1)F(0) ATP synthase produces ATP from ADP in the presence of a proton or sodium gradient. F-type ATPases consist of two structural domains, F(1) containing the extramembraneous catalytic core and F(0) containing the membrane proton channel, linked together by a central stalk and a peripheral stalk. During catalysis, ATP synthesis in the catalytic domain of F(1) is coupled via a rotary mechanism of the central stalk subunits to proton translocation. In terms of biological role, key component of the F(0) channel; it plays a direct role in translocation across the membrane. A homomeric c-ring of between 10-14 subunits forms the central stalk rotor element with the F(1) delta and epsilon subunits. The protein is ATP synthase subunit c of Mycoplasmoides gallisepticum (strain R(low / passage 15 / clone 2)) (Mycoplasma gallisepticum).